We begin with the raw amino-acid sequence, 274 residues long: Large ribosomal subunit protein uL2 (274 aa).

Residues 214–274 form a disordered region; that stretch reads LGRRPRTRPV…NKYIVERRKK (61 aa).

It belongs to the universal ribosomal protein uL2 family. Part of the 50S ribosomal subunit. Forms a bridge to the 30S subunit in the 70S ribosome.

In terms of biological role, one of the primary rRNA binding proteins. Required for association of the 30S and 50S subunits to form the 70S ribosome, for tRNA binding and peptide bond formation. It has been suggested to have peptidyltransferase activity; this is somewhat controversial. Makes several contacts with the 16S rRNA in the 70S ribosome. In Flavobacterium johnsoniae (strain ATCC 17061 / DSM 2064 / JCM 8514 / BCRC 14874 / CCUG 350202 / NBRC 14942 / NCIMB 11054 / UW101) (Cytophaga johnsonae), this protein is Large ribosomal subunit protein uL2.